The chain runs to 74 residues: MFTMKKSLLFFFFLGTIALSLCEEERGADEEENGAEITDEEVKRGILLNTLKGAAKNVAGVLLDKLKCKITGGC.

The N-terminal stretch at 1 to 22 (MFTMKKSLLFFFFLGTIALSLC) is a signal peptide. The propeptide occupies 23 to 42 (EEERGADEEENGAEITDEEV). The cysteines at positions 68 and 74 are disulfide-linked.

As to expression, expressed by the skin glands.

It is found in the secreted. Functionally, antimicrobial peptide. The protein is Pelophylaxin-2 of Pelophylax fukienensis (Fukien gold-striped pond frog).